We begin with the raw amino-acid sequence, 308 residues long: MASNPDFLWCKEERKQESFFKVLKRSDMSSEDTRAIPYDFVINFSDNELSGDMKFRVQWGNSWKVKISKNPRFYFMEKSGWEKFVIDNALGDHEFLTFTHKGQMSFTVKIFNKDGKEMMQPPQSRASFASSSRVKTEQDVKREEEVLVSSDSRSRGPTTAAETNRGGSYKRKLNFGKKKAEETQTYKRTERTQNSKRTERVVSKERVYAGEPSSSVAGFKIFISKSYIKSLAIPKPFGNYMPKEKTRVKIHHPDGEKTWKVVFVVKERGQIFSGGWKRLCKEYPVVFGDTCKFTLITPLELLLVVSKP.

Residues 19 to 114 (FFKVLKRSDM…SFTVKIFNKD (96 aa)) constitute a DNA-binding region (TF-B3 1). Residues 117-198 (EMMQPPQSRA…TERTQNSKRT (82 aa)) form a disordered region. The segment covering 121-133 (PPQSRASFASSSR) has biased composition (polar residues). Positions 134-145 (VKTEQDVKREEE) are enriched in basic and acidic residues. Positions 149–166 (SSDSRSRGPTTAAETNRG) are enriched in polar residues. Residues 168 to 177 (SYKRKLNFGK) are compositionally biased toward basic residues. Residues 178 to 198 (KKAEETQTYKRTERTQNSKRT) are compositionally biased toward basic and acidic residues. The TF-B3 2 DNA-binding region spans 216–308 (VAGFKIFISK…LELLLVVSKP (93 aa)).

The protein localises to the nucleus. The polypeptide is B3 domain-containing protein REM23 (REM23) (Arabidopsis thaliana (Mouse-ear cress)).